Here is a 131-residue protein sequence, read N- to C-terminus: MAKRNVVAKKKVVKKNIARGVVYISATFNNTNITITDEMGNVICWSTAGGLGFKGSKKSTPYAAQQAVESALSKAKEHGVKEVGIKVQGPGSGRETAIKSVGATEGVKVLWIKDITPLPHNGCRPPKRRRV.

It belongs to the universal ribosomal protein uS11 family. As to quaternary structure, part of the 30S ribosomal subunit. Interacts with proteins S7 and S18. Binds to IF-3.

In terms of biological role, located on the platform of the 30S subunit, it bridges several disparate RNA helices of the 16S rRNA. Forms part of the Shine-Dalgarno cleft in the 70S ribosome. This chain is Small ribosomal subunit protein uS11, found in Helicobacter pylori (strain P12).